The primary structure comprises 308 residues: Glutaminase (308 aa).

7 residues coordinate substrate: Ser66, Asn117, Glu161, Asn168, Tyr192, Tyr244, and Val262.

This sequence belongs to the glutaminase family. In terms of assembly, homotetramer.

The enzyme catalyses L-glutamine + H2O = L-glutamate + NH4(+). The protein is Glutaminase of Salmonella choleraesuis (strain SC-B67).